Reading from the N-terminus, the 370-residue chain is MATHKLLLLPGDGIGTEVMAEVSRLIDWLNKAGIASFETEHGLVGGAAYDADKVAITDATMALAQASDAVIFGAVGGPKWDAVPYDARPEAGLLRLRKDLALFANLRPAVCYPALAEASSLKPEVVEGLDIMIVRELTGGVYFGEPKTITDLGNGQKRAIDTQVYDTYEIERIGRVAFDLARKRRNKVTSMEKRNVMKTGVLWNEVITQVHAREYKDVQLEHQLADSGGMNLVKWPKQFDVIVTDNLFGDMLSDIAAMLTGSLGMLPSASLGAVDDTTGKRKAMYEPVHGSAPDIAGKGLANPVAMLASFGMALRYSLDMGELADKLDEAIAVVLARGLRTADIKSEGSTVVSTSQMGEAIVQEMQALHG.

77 to 90 is a binding site for NAD(+); that stretch reads GPKWDAVPYDARPE. 4 residues coordinate substrate: arginine 97, arginine 107, arginine 135, and aspartate 226. Aspartate 226, aspartate 250, and aspartate 254 together coordinate Mg(2+). Residue 290–302 participates in NAD(+) binding; it reads GSAPDIAGKGLAN.

This sequence belongs to the isocitrate and isopropylmalate dehydrogenases family. LeuB type 1 subfamily. In terms of assembly, homodimer. Mg(2+) is required as a cofactor. It depends on Mn(2+) as a cofactor.

It localises to the cytoplasm. The catalysed reaction is (2R,3S)-3-isopropylmalate + NAD(+) = 4-methyl-2-oxopentanoate + CO2 + NADH. Its pathway is amino-acid biosynthesis; L-leucine biosynthesis; L-leucine from 3-methyl-2-oxobutanoate: step 3/4. Its function is as follows. Catalyzes the oxidation of 3-carboxy-2-hydroxy-4-methylpentanoate (3-isopropylmalate) to 3-carboxy-4-methyl-2-oxopentanoate. The product decarboxylates to 4-methyl-2 oxopentanoate. This chain is 3-isopropylmalate dehydrogenase, found in Rhodopseudomonas palustris (strain HaA2).